Here is a 595-residue protein sequence, read N- to C-terminus: UvrABC system protein C (595 aa).

Residues 17–94 form the GIY-YIG domain; the sequence is IEPGCYLMKD…IKQYQPRYNI (78 aa). The region spanning 199–234 is the UVR domain; that stretch reads KTILHNLEQKMQESSESLDFERAKEYRDLIQHIHNL.

It belongs to the UvrC family. Interacts with UvrB in an incision complex.

It is found in the cytoplasm. Its function is as follows. The UvrABC repair system catalyzes the recognition and processing of DNA lesions. UvrC both incises the 5' and 3' sides of the lesion. The N-terminal half is responsible for the 3' incision and the C-terminal half is responsible for the 5' incision. This chain is UvrABC system protein C, found in Staphylococcus saprophyticus subsp. saprophyticus (strain ATCC 15305 / DSM 20229 / NCIMB 8711 / NCTC 7292 / S-41).